A 472-amino-acid chain; its full sequence is Methanethiol oxidase (472 aa).

This sequence belongs to the selenium-binding protein family.

It is found in the nucleus. It localises to the cytoplasm. The protein localises to the cytosol. The protein resides in the membrane. The catalysed reaction is methanethiol + O2 + H2O = hydrogen sulfide + formaldehyde + H2O2 + H(+). The protein operates within organosulfur degradation. Its function is as follows. Catalyzes the oxidation of methanethiol, an organosulfur compound known to be produced in substantial amounts by gut bacteria. Selenium-binding protein which may be involved in the sensing of reactive xenobiotics in the cytoplasm. May be involved in intra-Golgi protein transport. The sequence is that of Methanethiol oxidase (selenbp1-a) from Xenopus laevis (African clawed frog).